The chain runs to 392 residues: Succinate--CoA ligase [ADP-forming] subunit beta (392 aa).

Positions 9 to 236 (RDLFERHGLP…QAAVDPLEQA (228 aa)) constitute an ATP-grasp domain. Residues Lys45, 52 to 54 (GRG), Ala94, and Glu99 contribute to the ATP site. Asn191 and Asp205 together coordinate Mg(2+). Residues Asn256 and 318–320 (GIT) contribute to the substrate site.

The protein belongs to the succinate/malate CoA ligase beta subunit family. Heterotetramer of two alpha and two beta subunits. It depends on Mg(2+) as a cofactor.

The enzyme catalyses succinate + ATP + CoA = succinyl-CoA + ADP + phosphate. It catalyses the reaction GTP + succinate + CoA = succinyl-CoA + GDP + phosphate. Its pathway is carbohydrate metabolism; tricarboxylic acid cycle; succinate from succinyl-CoA (ligase route): step 1/1. Succinyl-CoA synthetase functions in the citric acid cycle (TCA), coupling the hydrolysis of succinyl-CoA to the synthesis of either ATP or GTP and thus represents the only step of substrate-level phosphorylation in the TCA. The beta subunit provides nucleotide specificity of the enzyme and binds the substrate succinate, while the binding sites for coenzyme A and phosphate are found in the alpha subunit. This is Succinate--CoA ligase [ADP-forming] subunit beta from Salinispora arenicola (strain CNS-205).